The primary structure comprises 194 residues: Holliday junction branch migration complex subunit RuvA (194 aa).

Residues 1–64 (MIGRLRGILA…EDSVSLYGFL (64 aa)) are domain I. Positions 65–140 (REGERRLFRD…RAADFSSGAP (76 aa)) are domain II. Residues 140–144 (PITGQ) are flexible linker. Residues 145–194 (LGPDAVSEATVALQQLGYKPAEAARMARDAGAEGDEVATVIRKALQAALR) form a domain III region.

It belongs to the RuvA family. In terms of assembly, homotetramer. Forms an RuvA(8)-RuvB(12)-Holliday junction (HJ) complex. HJ DNA is sandwiched between 2 RuvA tetramers; dsDNA enters through RuvA and exits via RuvB. An RuvB hexamer assembles on each DNA strand where it exits the tetramer. Each RuvB hexamer is contacted by two RuvA subunits (via domain III) on 2 adjacent RuvB subunits; this complex drives branch migration. In the full resolvosome a probable DNA-RuvA(4)-RuvB(12)-RuvC(2) complex forms which resolves the HJ.

The protein localises to the cytoplasm. Functionally, the RuvA-RuvB-RuvC complex processes Holliday junction (HJ) DNA during genetic recombination and DNA repair, while the RuvA-RuvB complex plays an important role in the rescue of blocked DNA replication forks via replication fork reversal (RFR). RuvA specifically binds to HJ cruciform DNA, conferring on it an open structure. The RuvB hexamer acts as an ATP-dependent pump, pulling dsDNA into and through the RuvAB complex. HJ branch migration allows RuvC to scan DNA until it finds its consensus sequence, where it cleaves and resolves the cruciform DNA. In Xanthomonas axonopodis pv. citri (strain 306), this protein is Holliday junction branch migration complex subunit RuvA.